Here is a 420-residue protein sequence, read N- to C-terminus: Methanogen homoaconitase large subunit (420 aa).

Positions 302, 362, and 365 each coordinate [4Fe-4S] cluster.

This sequence belongs to the aconitase/IPM isomerase family. LeuC type 2 subfamily. In terms of assembly, heterotetramer of 2 HacA and 2 HacB proteins. [4Fe-4S] cluster is required as a cofactor.

The catalysed reaction is (2R)-homocitrate = (2R,3S)-homoisocitrate. It catalyses the reaction (2R)-homocitrate = cis-homoaconitate + H2O. The enzyme catalyses (2R,3S)-homoisocitrate = cis-homoaconitate + H2O. It carries out the reaction cis-(homo)2aconitate + H2O = (2R,3S)-iso(homo)2citrate. The catalysed reaction is cis-(homo)3aconitate + H2O = (2R,3S)-iso(homo)3citrate. It catalyses the reaction (R)-malate = maleate + H2O. The enzyme catalyses cis-aconitate + H2O = D-threo-isocitrate. The protein operates within organic acid metabolism; 2-oxosuberate biosynthesis. In terms of biological role, component of a hydro-lyase with broad substrate specificity for cis-unsaturated tricarboxylic acids. Catalyzes both the reversible dehydration of (R)-homocitrate ((R)-2-hydroxybutane-1,2,4-tricarboxylate) to produce cis-homoaconitate ((Z)-but-1-ene-1,2,4-tricarboxylate), and its hydration to homoisocitrate ((1R,2S)-1-hydroxybutane-1,2,4-tricarboxylate). Is also able to hydrate the analogous longer chain substrates cis-homo(2)-aconitate, cis-homo(3)-aconitate, and even the non-physiological cis-homo(4)-aconitate with similar efficiency. These reactions are part of the biosynthesis pathway of coenzyme B. Can also catalyze the hydration of maleate to (R)-malate, and that of cis-aconitate. Cannot catalyze the hydration of citraconate and the dehydration of (S)-homocitrate, citramalate, 2-isopropylmalate, 3-isopropylmalate, citrate or threo-DL-isocitrate. The protein is Methanogen homoaconitase large subunit (hacA) of Methanocaldococcus jannaschii (strain ATCC 43067 / DSM 2661 / JAL-1 / JCM 10045 / NBRC 100440) (Methanococcus jannaschii).